The primary structure comprises 615 residues: Dihydroxy-acid dehydratase (615 aa).

Residue aspartate 81 participates in Mg(2+) binding. Residue cysteine 122 coordinates [2Fe-2S] cluster. Aspartate 123 and lysine 124 together coordinate Mg(2+). Lysine 124 is modified (N6-carboxylysine). Cysteine 195 contributes to the [2Fe-2S] cluster binding site. Glutamate 491 is a Mg(2+) binding site. Serine 517 acts as the Proton acceptor in catalysis.

This sequence belongs to the IlvD/Edd family. In terms of assembly, homodimer. [2Fe-2S] cluster is required as a cofactor. It depends on Mg(2+) as a cofactor.

The catalysed reaction is (2R)-2,3-dihydroxy-3-methylbutanoate = 3-methyl-2-oxobutanoate + H2O. The enzyme catalyses (2R,3R)-2,3-dihydroxy-3-methylpentanoate = (S)-3-methyl-2-oxopentanoate + H2O. It participates in amino-acid biosynthesis; L-isoleucine biosynthesis; L-isoleucine from 2-oxobutanoate: step 3/4. The protein operates within amino-acid biosynthesis; L-valine biosynthesis; L-valine from pyruvate: step 3/4. In terms of biological role, functions in the biosynthesis of branched-chain amino acids. Catalyzes the dehydration of (2R,3R)-2,3-dihydroxy-3-methylpentanoate (2,3-dihydroxy-3-methylvalerate) into 2-oxo-3-methylpentanoate (2-oxo-3-methylvalerate) and of (2R)-2,3-dihydroxy-3-methylbutanoate (2,3-dihydroxyisovalerate) into 2-oxo-3-methylbutanoate (2-oxoisovalerate), the penultimate precursor to L-isoleucine and L-valine, respectively. The polypeptide is Dihydroxy-acid dehydratase (Shewanella pealeana (strain ATCC 700345 / ANG-SQ1)).